We begin with the raw amino-acid sequence, 521 residues long: Medium/long-chain-fatty-acid--[acyl-carrier-protein] ligase MbtM (521 aa).

The protein belongs to the ATP-dependent AMP-binding enzyme family.

It carries out the reaction a long-chain fatty acid + holo-[ACP] + ATP = a long-chain fatty acyl-[ACP] + AMP + diphosphate. The catalysed reaction is a medium-chain fatty acid + holo-[ACP] + ATP = a medium-chain fatty acyl-[ACP] + AMP + diphosphate. It participates in siderophore biosynthesis; mycobactin biosynthesis. Activates lipidic moieties required for mycobactin biosynthesis. Converts medium- to long-chain aliphatic fatty acids into acyl adenylate, which is further transferred on to the phosphopantetheine arm of the carrier protein MbtL. This Mycobacterium bovis (strain ATCC BAA-935 / AF2122/97) protein is Medium/long-chain-fatty-acid--[acyl-carrier-protein] ligase MbtM (mbtM).